The primary structure comprises 311 residues: tRNA-cytidine(32) 2-sulfurtransferase (311 aa).

Residues 47–52 carry the PP-loop motif motif; it reads SGGKDS. [4Fe-4S] cluster-binding residues include Cys122, Cys125, and Cys213.

This sequence belongs to the TtcA family. As to quaternary structure, homodimer. Mg(2+) serves as cofactor. Requires [4Fe-4S] cluster as cofactor.

It localises to the cytoplasm. The catalysed reaction is cytidine(32) in tRNA + S-sulfanyl-L-cysteinyl-[cysteine desulfurase] + AH2 + ATP = 2-thiocytidine(32) in tRNA + L-cysteinyl-[cysteine desulfurase] + A + AMP + diphosphate + H(+). Its pathway is tRNA modification. Catalyzes the ATP-dependent 2-thiolation of cytidine in position 32 of tRNA, to form 2-thiocytidine (s(2)C32). The sulfur atoms are provided by the cysteine/cysteine desulfurase (IscS) system. The protein is tRNA-cytidine(32) 2-sulfurtransferase of Escherichia fergusonii (strain ATCC 35469 / DSM 13698 / CCUG 18766 / IAM 14443 / JCM 21226 / LMG 7866 / NBRC 102419 / NCTC 12128 / CDC 0568-73).